A 171-amino-acid polypeptide reads, in one-letter code: MTKKVAIILANEFEDIEYSSPKEALENAGFNTVVIGDTANSEVFGKHGEKVTVDVGIAEAKPEDYDALLIPGGFSPDHLRGDTEGRYGTFAKYFTKNDVPTFAICHGPQILIDTDDLKGRTLTAVLNVRKDLSNAGAHVVDESVVVDNNIVTSRVPDDLDDFNREIVKQLQ.

A PfpI endopeptidase domain is found at 3–171 (KKVAIILANE…FNREIVKQLQ (169 aa)).

Belongs to the peptidase C56 family.

This is an uncharacterized protein from Staphylococcus aureus (strain MRSA252).